Here is a 181-residue protein sequence, read N- to C-terminus: MKLNVTIEIPKNSNIKYEYDRATKEIMVDRILHGSMVYPHNYGFLKEALDYDGDELDVLVFADQAFQPGIKVPARVLGAMKMIDGGETDTKLLAVIDVDPRYKHINNFKDIPLHWLAEVQDFFENYKNLQNKKVKILGFEDEIWAQKEYEECVLLMKEYGHLKKDEFVTKMMKERPEKYIK.

Residues lysine 16, arginine 30, and tyrosine 42 each contribute to the substrate site. Residues aspartate 52, aspartate 57, and aspartate 89 each contribute to the Mg(2+) site. Position 126 (tyrosine 126) interacts with substrate.

The protein belongs to the PPase family. Homohexamer. Mg(2+) serves as cofactor.

It localises to the cytoplasm. It carries out the reaction diphosphate + H2O = 2 phosphate + H(+). Functionally, catalyzes the hydrolysis of inorganic pyrophosphate (PPi) forming two phosphate ions. The sequence is that of Inorganic pyrophosphatase from Ureaplasma parvum serovar 3 (strain ATCC 700970).